Reading from the N-terminus, the 106-residue chain is Large ribosomal subunit protein uL24 (106 aa).

It belongs to the universal ribosomal protein uL24 family. As to quaternary structure, part of the 50S ribosomal subunit.

In terms of biological role, one of two assembly initiator proteins, it binds directly to the 5'-end of the 23S rRNA, where it nucleates assembly of the 50S subunit. Its function is as follows. One of the proteins that surrounds the polypeptide exit tunnel on the outside of the subunit. This chain is Large ribosomal subunit protein uL24, found in Clostridium tetani (strain Massachusetts / E88).